We begin with the raw amino-acid sequence, 490 residues long: Sphingomyelinase (490 aa).

The signal sequence occupies residues 1–31 (MDYAKRIGQVGALAVVLGVGAAVTTHAIGSA). The disordered stretch occupies residues 30–49 (SAAPTDPSSSSTDSPVDACS). Over 32-136 (APTDPSSSST…FDACDPDGNR (105 aa)) the chain is Periplasmic. The chain crosses the membrane as a beta stranded span at residues 137–145 (MTFAVRERG). Residues 146–161 (APGGPQHGIVTVDQRT) are Extracellular-facing. A beta stranded membrane pass occupies residues 162–168 (ASFIYTA). The Periplasmic portion of the chain corresponds to 169–171 (DPG). The chain crosses the membrane as a beta stranded span at residues 172–182 (FVGTDTFSVNV). The Extracellular segment spans residues 183–187 (SDDTS). A beta stranded membrane pass occupies residues 188-196 (LHVHGLAGY). The Periplasmic portion of the chain corresponds to 197 to 204 (LGPFHGHD). Residues 205 to 213 (DVATVTVFV) traverse the membrane as a beta stranded segment. Residues 214-490 (GNTPTDTISG…HYVADNVAVR (277 aa)) are Extracellular-facing.

It belongs to the SpmT family.

The protein localises to the cell outer membrane. The catalysed reaction is a sphingomyelin + H2O = phosphocholine + an N-acylsphing-4-enine + H(+). Catalyzes the cleavage of sphingomyelin, a major lipid in eukaryotic cells, into ceramide and phosphocholine, which are then utilized by M.bovis as carbon, nitrogen and phosphorus sources, respectively. Thus, enables M.bovis to utilize sphingomyelin as a source of several essential nutrients for intracellular growth during infection. Furthermore, lyses erythrocytes and constitutes a hemolytic factor. This Mycobacterium bovis (strain ATCC BAA-935 / AF2122/97) protein is Sphingomyelinase.